The sequence spans 1413 residues: ABC transporter G family member 33 (1413 aa).

The span at 1–10 (MGSSFRSSSS) shows a compositional bias: low complexity. The interval 1–21 (MGSSFRSSSSRNEHEDGGDEA) is disordered. Basic and acidic residues predominate over residues 11-21 (RNEHEDGGDEA). One can recognise an ABC transporter 1 domain in the interval 140–412 (LKLSGVRTNE…FEECGFQCPE (273 aa)). 172–179 (GPPGCGKT) contacts ATP. An ABC transmembrane type-2 1 domain is found at 490 to 702 (ELFRACISRE…AEIGLSVNEF (213 aa)). The next 6 helical transmembrane spans lie at 509–529 (VYLF…TVFI), 546–566 (CLFF…SMTV), 580–600 (FYPA…LSFF), 626–646 (FMIL…IAAI), 652–672 (AAMT…GFAI), and 738–758 (LSAL…ALSF). The region spanning 813–1065 (ITFQDLNYYV…CVIEYFQNIP (253 aa)) is the ABC transporter 2 domain. 858-865 (GISGAGKT) provides a ligand contact to ATP. In terms of domain architecture, ABC transmembrane type-2 2 spans 1138-1352 (EQFKSCLWKM…TLNLFFSSQY (215 aa)). Transmembrane regions (helical) follow at residues 1157 to 1177 (YNLM…LLFW), 1189 to 1209 (LFTV…NNCT), 1245 to 1265 (IPYI…MIGF), 1276 to 1296 (LYAM…LISI), 1302 to 1322 (VAAI…GFLI), 1330 to 1350 (WWVW…FFSS), and 1385 to 1405 (ITAI…AFFV).

The protein belongs to the ABC transporter superfamily. ABCG family. PDR (TC 3.A.1.205) subfamily. As to expression, expressed in roots and stems.

The protein resides in the membrane. In terms of biological role, may be a general defense protein. In Arabidopsis thaliana (Mouse-ear cress), this protein is ABC transporter G family member 33 (ABCG33).